The primary structure comprises 593 residues: Gamma-humulene synthase (593 aa).

Polar residues predominate over residues 1-26 (MAQISESVSPSTDLKSTESSITSNRH). Positions 1–34 (MAQISESVSPSTDLKSTESSITSNRHGNMWEDDR) are disordered. 4 residues coordinate Mg(2+): D343, D347, D488, and E496. The DDXXD motif signature appears at 343–347 (DDLYD).

Belongs to the terpene synthase family. Tpsd subfamily. The cofactor is Mg(2+). K(+) serves as cofactor.

The protein resides in the cytoplasm. The enzyme catalyses (2E,6E)-farnesyl diphosphate = gamma-humulene + diphosphate. It catalyses the reaction (2E,6E)-farnesyl diphosphate = sibirene + diphosphate. The catalysed reaction is (2E,6E)-farnesyl diphosphate = longifolene + diphosphate. It carries out the reaction (2E,6E)-farnesyl diphosphate = beta-himachalene + diphosphate. The enzyme catalyses (2E,6E)-farnesyl diphosphate = gamma-himachalene + diphosphate. It catalyses the reaction (2E,6E)-farnesyl diphosphate = alpha-himachalene + diphosphate. The protein operates within terpene metabolism; oleoresin biosynthesis. Its function is as follows. Involved in defensive oleoresin formation in conifers in response to insect attack or other injury. Involved in 52 sesquiterpene (C15) olefins biosynthesis. This chain is Gamma-humulene synthase (ag5), found in Abies grandis (Grand fir).